Reading from the N-terminus, the 460-residue chain is Probable lipase C14C8.15 (460 aa).

Residues 1-16 (MTLNGNIMKYCLEKGE) are Cytoplasmic-facing. Residues 17-37 (ILISFLLIALESMFRICTVIL) form a helical; Signal-anchor for type II membrane protein membrane-spanning segment. Over 38–460 (PSPLRNWFYE…LVDGVMNHTI (423 aa)) the chain is Lumenal. Ser214 (nucleophile) is an active-site residue. The N-linked (GlcNAc...) asparagine glycan is linked to Asn308. Active-site charge relay system residues include Asp382 and His408. Residue Asn457 is glycosylated (N-linked (GlcNAc...) asparagine).

Belongs to the AB hydrolase superfamily. Lipase family.

Its subcellular location is the golgi apparatus. The protein resides in the membrane. Functionally, probable lipase. This Schizosaccharomyces pombe (strain 972 / ATCC 24843) (Fission yeast) protein is Probable lipase C14C8.15.